Here is a 376-residue protein sequence, read N- to C-terminus: Queuine tRNA-ribosyltransferase (376 aa).

Catalysis depends on Asp93, which acts as the Proton acceptor. Residues 93 to 97 (DSGGF), Asp147, Gln190, and Gly217 each bind substrate. The interval 248 to 254 (GVGKPDD) is RNA binding. Catalysis depends on Asp267, which acts as the Nucleophile. Cys305, Cys307, Cys310, and His336 together coordinate Zn(2+).

This sequence belongs to the queuine tRNA-ribosyltransferase family. In terms of assembly, homodimer. Within each dimer, one monomer is responsible for RNA recognition and catalysis, while the other monomer binds to the replacement base PreQ1. The cofactor is Zn(2+).

It catalyses the reaction 7-aminomethyl-7-carbaguanine + guanosine(34) in tRNA = 7-aminomethyl-7-carbaguanosine(34) in tRNA + guanine. Its pathway is tRNA modification; tRNA-queuosine biosynthesis. In terms of biological role, catalyzes the base-exchange of a guanine (G) residue with the queuine precursor 7-aminomethyl-7-deazaguanine (PreQ1) at position 34 (anticodon wobble position) in tRNAs with GU(N) anticodons (tRNA-Asp, -Asn, -His and -Tyr). Catalysis occurs through a double-displacement mechanism. The nucleophile active site attacks the C1' of nucleotide 34 to detach the guanine base from the RNA, forming a covalent enzyme-RNA intermediate. The proton acceptor active site deprotonates the incoming PreQ1, allowing a nucleophilic attack on the C1' of the ribose to form the product. After dissociation, two additional enzymatic reactions on the tRNA convert PreQ1 to queuine (Q), resulting in the hypermodified nucleoside queuosine (7-(((4,5-cis-dihydroxy-2-cyclopenten-1-yl)amino)methyl)-7-deazaguanosine). The sequence is that of Queuine tRNA-ribosyltransferase from Jannaschia sp. (strain CCS1).